The sequence spans 322 residues: Ribose-phosphate pyrophosphokinase 1 (322 aa).

Residues 39 to 41 (DGE) and 98 to 99 (RQ) contribute to the ATP site. His132 and Asp173 together coordinate Mg(2+). The active site involves Lys196. Residues Arg198, Asp224, and 228-232 (DTAGT) contribute to the D-ribose 5-phosphate site.

This sequence belongs to the ribose-phosphate pyrophosphokinase family. Class I subfamily. In terms of assembly, homohexamer. The cofactor is Mg(2+).

The protein resides in the cytoplasm. The catalysed reaction is D-ribose 5-phosphate + ATP = 5-phospho-alpha-D-ribose 1-diphosphate + AMP + H(+). It functions in the pathway metabolic intermediate biosynthesis; 5-phospho-alpha-D-ribose 1-diphosphate biosynthesis; 5-phospho-alpha-D-ribose 1-diphosphate from D-ribose 5-phosphate (route I): step 1/1. Functionally, involved in the biosynthesis of the central metabolite phospho-alpha-D-ribosyl-1-pyrophosphate (PRPP) via the transfer of pyrophosphoryl group from ATP to 1-hydroxyl of ribose-5-phosphate (Rib-5-P). This is Ribose-phosphate pyrophosphokinase 1 from Streptococcus agalactiae serotype III (strain NEM316).